Consider the following 185-residue polypeptide: MQGLLLSLSLLASAAVGVLASDDLKIDVTLPVECDRVTKKGDKINVHYKGTLKSNGEKFDSSYDRQSPFSFKLGAGMVIKGWDEGLVDMCIGEKRTLTIGPSYGYGDRNVGPIPAGSTLVFETELVGIEGVPKPESIVTKSATDAPESTASAKVVEKVASVAKQAAEVVETIIADTDDTQEHNEL.

The first 20 residues, Met1 to Ala20, serve as a signal peptide directing secretion. Positions Gly41 to Glu129 constitute a PPIase FKBP-type domain. Positions His182 to Leu185 match the Prevents secretion from ER motif.

This sequence belongs to the FKBP-type PPIase family. FKBP2 subfamily.

It is found in the endoplasmic reticulum. It catalyses the reaction [protein]-peptidylproline (omega=180) = [protein]-peptidylproline (omega=0). With respect to regulation, inhibited by both FK506 and rapamycin. Functionally, PPIases accelerate the folding of proteins. It catalyzes the cis-trans isomerization of proline imidic peptide bonds in oligopeptides. This Podospora anserina (Pleurage anserina) protein is FK506-binding protein 2 (FPR2).